Here is a 366-residue protein sequence, read N- to C-terminus: MGKGGNSEDAVSGKEHGEENMAAWLLGIKTLKIQPYILPSLGPYDVKVRIKAVGICGSDVHHFKTMRCANFIVKKPMVIGHECAGIIEEVGSEVKNLVAGDRVALEPGISCNRCSLCRNGQYNLCREMKFFGSPPTNGSLANQVVHPSNLCFKLPDNVSLEEGAMCEPLSVGIHACRRANVGPETNVLIMGSGPIGLVTMLAARAFGAPRIVLVDVDDQRLAIAKDLGADDIIRVSTNIQDLDEEVAKIQSTMVTGVDVSFDCVGFNKTMSTALNATRAGGKVCLVGLAQSEMTVPLTPAAAREVDIVGIFRYRNTWPLCLEFLRSGKIDVKPLITHRFTFSQKDVEEAFETSARGGNAIKVMFNL.

Zn(2+) is bound by residues Cys56, His81, Cys111, Cys114, Cys117, Cys125, and Glu167.

The protein belongs to the zinc-containing alcohol dehydrogenase family. Zn(2+) is required as a cofactor.

It catalyses the reaction L-idonate + NAD(+) = 5-dehydro-D-gluconate + NADH + H(+). It functions in the pathway carbohydrate acid metabolism; L-idonate degradation. Its function is as follows. Involved in the catabolism of ascorbate to tartrate. The enzyme has no activity with NADP(+). This chain is L-idonate 5-dehydrogenase, found in Vitis vinifera (Grape).